Here is a 92-residue protein sequence, read N- to C-terminus: Transcriptional regulator WhiB1 (92 aa).

A 4Fe-4S Wbl-type domain is found at 12–74 (ACRDKDPELF…GGLSEDERRA (63 aa)). [4Fe-4S] cluster contacts are provided by Cys-13, Cys-41, Cys-44, and Cys-50.

It belongs to the WhiB family. The cofactor is [4Fe-4S] cluster. The Fe-S cluster can be nitrosylated by nitric oxide (NO). In terms of processing, upon Fe-S cluster removal intramolecular disulfide bonds are formed.

It localises to the cytoplasm. Functionally, acts as a transcriptional regulator. Probably redox-responsive. The apo- but not holo-form probably binds DNA. This chain is Transcriptional regulator WhiB1 (whiB1), found in Bifidobacterium longum (strain NCC 2705).